The sequence spans 260 residues: UPF0294 protein YE0917 (260 aa).

Belongs to the UPF0294 family.

The protein resides in the cytoplasm. The chain is UPF0294 protein YE0917 from Yersinia enterocolitica serotype O:8 / biotype 1B (strain NCTC 13174 / 8081).